Here is a 1180-residue protein sequence, read N- to C-terminus: Chitin synthase 6 (1180 aa).

Helical transmembrane passes span phenylalanine 108 to phenylalanine 128 and leucine 374 to leucine 394. N-linked (GlcNAc...) asparagine glycosylation is present at asparagine 737. 3 helical membrane passes run phenylalanine 762–valine 782, isoleucine 795–leucine 815, and tyrosine 822–isoleucine 842. The region spanning aspartate 1118–serine 1175 is the DEK-C domain.

The protein belongs to the chitin synthase family. Class V subfamily.

The protein resides in the cell membrane. The protein localises to the cytoplasmic vesicle membrane. The catalysed reaction is [(1-&gt;4)-N-acetyl-beta-D-glucosaminyl](n) + UDP-N-acetyl-alpha-D-glucosamine = [(1-&gt;4)-N-acetyl-beta-D-glucosaminyl](n+1) + UDP + H(+). In terms of biological role, polymerizes chitin, a structural polymer of the cell wall and septum, by transferring the sugar moiety of UDP-GlcNAc to the non-reducing end of the growing chitin polymer. Plays a crucial role during infection and allows the fungus to overcome the resistance of the plant that checks growth of the pathogen and eventually eliminates it. The sequence is that of Chitin synthase 6 from Mycosarcoma maydis (Corn smut fungus).